The chain runs to 149 residues: Deoxyuridine 5'-triphosphate nucleotidohydrolase (149 aa).

Residues 68-70 (RSG), Asn81, 85-87 (LID), and Met95 contribute to the substrate site.

This sequence belongs to the dUTPase family. Mg(2+) is required as a cofactor.

The catalysed reaction is dUTP + H2O = dUMP + diphosphate + H(+). It participates in pyrimidine metabolism; dUMP biosynthesis; dUMP from dCTP (dUTP route): step 2/2. This enzyme is involved in nucleotide metabolism: it produces dUMP, the immediate precursor of thymidine nucleotides and it decreases the intracellular concentration of dUTP so that uracil cannot be incorporated into DNA. This is Deoxyuridine 5'-triphosphate nucleotidohydrolase from Polynucleobacter asymbioticus (strain DSM 18221 / CIP 109841 / QLW-P1DMWA-1) (Polynucleobacter necessarius subsp. asymbioticus).